Reading from the N-terminus, the 211-residue chain is uncharacterized protein (211 aa).

H54, H56, D58, H59, H129, D148, and H189 together coordinate Zn(2+).

It belongs to the metallo-beta-lactamase superfamily. Glyoxalase II family. Zn(2+) serves as cofactor.

This is an uncharacterized protein from Aquifex aeolicus (strain VF5).